Consider the following 535-residue polypeptide: Zinc finger protein squeeze (535 aa).

2 stretches are compositionally biased toward low complexity: residues 70–97 (MVME…HPPQ) and 131–142 (SSASGSGSNGSS). Residues 70–157 (MVMEQQPHPD…RRGDGDQAKP (88 aa)) form a disordered region. The segment covering 145 to 156 (EESRRGDGDQAK) has biased composition (basic and acidic residues). 5 consecutive C2H2-type zinc fingers follow at residues 158-180 (YKCG…TRIH), 186-208 (YRCE…IRTH), 214-238 (YKCR…SRCH), 244-266 (FKCN…IPKH), and 275-297 (HICN…LQKH). A Phosphothreonine modification is found at T395. Residues S399 and S401 each carry the phosphoserine modification. Positions 417–475 (TPQHHLQQQQQQQQQQQAQQQQQAQHQPSPGPGNSAFTPLSATVAPPPHLQQHRGPPGS) are disordered. Over residues 419-443 (QHHLQQQQQQQQQQQAQQQQQAQHQ) the composition is skewed to low complexity. S475 carries the phosphoserine modification. 2 positions are modified to phosphotyrosine: Y479 and Y481.

It belongs to the krueppel C2H2-type zinc-finger protein family. Interacts with nab; which acts as a coactivator. Interacts with ap. As to expression, largely restricted to subsets of cells in the CNS throughout embryonic and first instar larval (L1) development. Expressed in a population of lateral interneurons, primarily projecting axons in the anterior and posterior commissures. Overlaps with ap within the thoracic ap cluster. By stage 17, it is restricted to 2 neurons within the ap-cluster, with one neuron typically continuing to display higher levels of expression. Selectively expressed at higher levels within the FMRFa Tv neurons. Expressed in all leucokinergic cells.

It localises to the nucleus. Functionally, transcription factor involved in neuronal fate specification. First required in embryonic CNS development to define the number of cells that express apterous (ap) in the ap thoracic cluster of interneurons. Later on, it plays a central role in the combinatorial code of transcription factors that specifies the fate of the Tv neuron in the ap cluster by participating in the transcription regulation of FMRFa in Tv cells. Also required for projection neuron dendritic targeting. The chain is Zinc finger protein squeeze (sqz) from Drosophila melanogaster (Fruit fly).